We begin with the raw amino-acid sequence, 399 residues long: Tyrosine--tRNA ligase (399 aa).

Tyrosine 36 lines the L-tyrosine pocket. The 'HIGH' region motif lies at 41–50 (PTAPSLHIGN). Residues tyrosine 166 and glutamine 170 each contribute to the L-tyrosine site. The 'KMSKS' region signature appears at 226 to 230 (KMGKS). An ATP-binding site is contributed by lysine 229. The S4 RNA-binding domain occupies 332 to 395 (TRLVDVIVDL…KKRFVTVQVI (64 aa)).

Belongs to the class-I aminoacyl-tRNA synthetase family. TyrS type 1 subfamily. As to quaternary structure, homodimer.

It localises to the cytoplasm. The catalysed reaction is tRNA(Tyr) + L-tyrosine + ATP = L-tyrosyl-tRNA(Tyr) + AMP + diphosphate + H(+). Catalyzes the attachment of tyrosine to tRNA(Tyr) in a two-step reaction: tyrosine is first activated by ATP to form Tyr-AMP and then transferred to the acceptor end of tRNA(Tyr). The protein is Tyrosine--tRNA ligase of Mycoplasma pneumoniae (strain ATCC 29342 / M129 / Subtype 1) (Mycoplasmoides pneumoniae).